The chain runs to 793 residues: Endonuclease MutS2 (793 aa).

329-336 (GPNTGGKT) is an ATP binding site. Positions 611-639 (LARARQAVEPTEEEQRARRRGEVPRGLKP) are disordered. Residues 623-639 (EEQRARRRGEVPRGLKP) show a composition bias toward basic and acidic residues. The Smr domain occupies 717–792 (VDLRGLMVEE…GDGVTVAKLR (76 aa)).

This sequence belongs to the DNA mismatch repair MutS family. MutS2 subfamily. Homodimer. Binds to stalled ribosomes, contacting rRNA.

In terms of biological role, endonuclease that is involved in the suppression of homologous recombination and thus may have a key role in the control of bacterial genetic diversity. Functionally, acts as a ribosome collision sensor, splitting the ribosome into its 2 subunits. Detects stalled/collided 70S ribosomes which it binds and splits by an ATP-hydrolysis driven conformational change. Acts upstream of the ribosome quality control system (RQC), a ribosome-associated complex that mediates the extraction of incompletely synthesized nascent chains from stalled ribosomes and their subsequent degradation. Probably generates substrates for RQC. This chain is Endonuclease MutS2, found in Symbiobacterium thermophilum (strain DSM 24528 / JCM 14929 / IAM 14863 / T).